A 436-amino-acid chain; its full sequence is RNA-binding motif, single-stranded-interacting protein 3 (436 aa).

The disordered stretch occupies residues 28-56 (APAPHPMAPPSPSTNSSSNNSSNNSSGEQ). The segment covering 30 to 39 (APHPMAPPSP) has biased composition (pro residues). Over residues 40–53 (STNSSSNNSSNNSS) the composition is skewed to low complexity. RRM domains are found at residues 60-133 (TNLY…MAKQ) and 139-224 (TNLY…FADG). Over residues 398–421 (TSPQTVAPSSQDTSGQQQQIAVDT) the composition is skewed to polar residues. The segment at 398-436 (TSPQTVAPSSQDTSGQQQQIAVDTSNEHAPAYSYQQSKP) is disordered.

The protein resides in the cytoplasm. Its function is as follows. Binds poly(A) and poly(U) oligoribonucleotides. This chain is RNA-binding motif, single-stranded-interacting protein 3 (RBMS3), found in Pongo abelii (Sumatran orangutan).